Here is a 410-residue protein sequence, read N- to C-terminus: Chaperonin GroEL (410 aa).

ATP contacts are provided by residues 29–32 (TAGP), K50, and 86–90 (DGTTT).

It belongs to the chaperonin (HSP60) family. Forms a cylinder of 14 subunits composed of two heptameric rings stacked back-to-back. Interacts with the co-chaperonin GroES.

It localises to the cytoplasm. It carries out the reaction ATP + H2O + a folded polypeptide = ADP + phosphate + an unfolded polypeptide.. Functionally, together with its co-chaperonin GroES, plays an essential role in assisting protein folding. The GroEL-GroES system forms a nano-cage that allows encapsulation of the non-native substrate proteins and provides a physical environment optimized to promote and accelerate protein folding. This Ehrlichia canis protein is Chaperonin GroEL.